The following is a 691-amino-acid chain: Pentatricopeptide repeat-containing protein At5g27110 (691 aa).

PPR repeat units follow at residues Asp38–Arg68, Asp70–Val104, Asp106–Cys140, Asp141–Arg171, Asp172–Pro206, Asn207–Leu241, Asp242–Lys272, Ser273–Pro307, Ser308–Ala342, Asp343–Asp373, Val374–Pro408, Asp409–Thr443, Asp444–Lys474, Asp475–Pro509, Asp510–Lys540, and Ile546–Thr576. The interval Leu582 to Ser657 is type E motif. The segment at Asp658–Glu688 is type E(+) motif.

This sequence belongs to the PPR family. PCMP-E subfamily.

This chain is Pentatricopeptide repeat-containing protein At5g27110 (PCMP-E14), found in Arabidopsis thaliana (Mouse-ear cress).